A 160-amino-acid polypeptide reads, in one-letter code: Complexin-4 (160 aa).

The tract at residues K14–E44 is disordered. Cysteine methyl ester is present on C157. Residue C157 is the site of S-farnesyl cysteine attachment. Positions S158 to M160 are cleaved as a propeptide — removed in mature form.

This sequence belongs to the complexin/synaphin family. In terms of assembly, weakly binds to the SNARE core complex containing SNAP25, VAMP2 and STX1A. Post-translationally, farnesylation mediates presynaptic targeting and is important for function in neurotransmitter release. Present specifically in the retina (at protein level). Expressed in the outer nuclear layer of the retina (at protein level). Strongly expressed at rod photoreceptor ribbon synapses (at protein level). Not expressed at conventional amacrine cell synapses, nor at cone photoreceptor ribbon synapses (at protein level). Weakly expressed at cone photoreceptor synaptic terminals (at protein level). Not expressed in the brain (at protein level).

The protein resides in the synapse. It is found in the cell membrane. Its function is as follows. Complexin that regulates SNARE protein complex-mediated synaptic vesicle fusion. Required for the maintenance of synaptic ultrastructure in the adult retina. Positively regulates synaptic transmission through synaptic vesicle availability and exocytosis of neurotransmitters at photoreceptor ribbon synapses in the retina. Suppresses tonic photoreceptor activity and baseline 'noise' by suppression of Ca(2+) vesicle tonic release and the facilitation of evoked synchronous and asynchronous Ca(2+) vesicle release. This chain is Complexin-4 (Cplx4), found in Mus musculus (Mouse).